The chain runs to 66 residues: Gallinacin-8 (66 aa).

The signal sequence occupies residues 1-19 (MKILYLLLAVLLTVLQSSL). Residues 20-25 (GFMRVP) constitute a propeptide that is removed on maturation. 3 disulfides stabilise this stretch: C31–C60, C38–C54, and C43–C61.

This sequence belongs to the beta-defensin family. As to expression, expressed in the liver, kidney, gall bladder, testis, ovary and male and femae reproductive tracts. Expressed in the ovarian stroma and the theca and granulosa layers of the ovarian follicle.

The protein localises to the secreted. It is found in the cytoplasmic granule. Its function is as follows. Has bactericidal activity. The polypeptide is Gallinacin-8 (GAL8) (Gallus gallus (Chicken)).